Here is a 453-residue protein sequence, read N- to C-terminus: Aspartate aminotransferase, chloroplastic (453 aa).

Residues 1 to 44 (MASLMLSLGSTSLLPREINKDKLKLGTSASNPFLKAKSFSRVTM) constitute a chloroplast transit peptide. Positions 85, 181, and 234 each coordinate L-aspartate. N6-(pyridoxal phosphate)lysine is present on K298. Residue R427 participates in L-aspartate binding.

It belongs to the class-I pyridoxal-phosphate-dependent aminotransferase family. Homodimer. It depends on pyridoxal 5'-phosphate as a cofactor.

The protein resides in the plastid. It localises to the chloroplast. The protein localises to the amyloplast. It catalyses the reaction L-aspartate + 2-oxoglutarate = oxaloacetate + L-glutamate. Its function is as follows. Amino acid aminotransferase important for the metabolism of amino acids and Krebs-cycle related organic acids. No activity with D-Asp or D-Ala as amino donors. In plants, it is involved in nitrogen metabolism and in aspects of carbon and energy metabolism. The protein is Aspartate aminotransferase, chloroplastic (ASP5) of Arabidopsis thaliana (Mouse-ear cress).